Here is a 147-residue protein sequence, read N- to C-terminus: Organic hydroperoxide resistance transcriptional regulator (147 aa).

The 131-residue stretch at 11–141 (ENQLCFLLYA…LKSALYTLLE (131 aa)) folds into the HTH marR-type domain. C15 bears the Cysteine sulfenic acid (-SOH); alternate mark. C15 bears the S-bacillithiol cysteine disulfide; alternate mark. C15 bears the S-cysteinyl cysteine; alternate mark. Positions 15-16 (CF) form a cross-link, n,N-(cysteine-1,S-diyl)phenylalanine (Cys-Phe); alternate. The segment at residues 57–80 (VKKMGEQLYLDSGTLTPMLKRMEQ) is a DNA-binding region (H-T-H motif).

As to quaternary structure, homodimer. In terms of processing, cys-15 is oxidized by organic peroxides to cysteine sulfenic acid (Cys-SOH). This can react with the alpha-amido of the following residue to form the sulfenamide cross-link. Oxidation or cross-linking results in the loss of DNA-binding activity and the inactivation of repressor function. Both the cysteine sulfenic acid and the sulfenamide cross-link can react with free cysteine or bacillithiol (BSH) to form mixed disulfides. Further reduction of OhrR by free sulfhydryl compounds restores repressor activity.

It is found in the cytoplasm. Its activity is regulated as follows. Inactivated by oxidation of Cys-15 to a sulfenic acid. Organic peroxide sensor. Represses the expression of the peroxide-inducible gene ohrA by cooperative binding to two inverted repeat elements. The chain is Organic hydroperoxide resistance transcriptional regulator (ohrR) from Bacillus subtilis (strain 168).